The following is an 833-amino-acid chain: MASVFRSEEMCLSQVFLQVEAAYCCVAELGELGLVQFKDLNANVNSFQRKFVNEVRRCESLERILRFLEDEMQNEILIQVPEKDAETPLPREMITLETTLEKLEGELQEANQSHQALKKSFLELTELKYLLKKTQDFFETETNLGEDFFVEDTSGLLELRTIPAFMTGKLGFTAGVINRERMASFERLLWRVCRGNVYLKFSEMDTLLEDPVTKEEIKKNIFIIFYQGEQLRLKIKKICDGFRATIYPCPEHAAERREMLTSVNVRLEDLITVITQTESHRQRLLQEAAANWHSWVIKVQKMKAVYHVLNMCNIDVTQQCIIAEIWFPVADTRHIKKALEQGMELSGSSMIPIMTEVETKTDPPTFNRTNKFTAGFQNIVDAYGVGSYREINPAPYTIITFPFLFAVMFGDCGHGMVMLMAALWMVLNERHLLAQKSTNEMWNIFFNGRYLILLMGIFSIYTGLIYNDCFSKSFNIFGSSWSVQPMFRNGTWNTHIVENSPYLQLDPAIPGVYSGNPYPFGIDPIWNLASNKLTFLNSYKMKMSVILGIAHMIFGVILSLFNHIYFRRTLNIILQFIPEMIFMLSLFGYLVFMIIFKWCRYDAHTSRKAPSILIHFIGMFLFDYDDSSNAPLYGHQQEVQTFFVIIALVSVPWMLLIKPFVLRAKHQKSQLQSFTIHEDAVEGDHSGHSSKKTAGAHGMKDGHEEEFNFGDIFVHQAIHTIEYCLGCISNTASYLRLWALSLAHAELSEVLWTMVMSIGLRLQGWAGLVGVFIIFAVFAVLTVAILLVMEGLSAFLHALRLHWVEFQNKFYEGAGSKFSPFSFKHVLEGTAEE.

Over 1–390 (MASVFRSEEM…DAYGVGSYRE (390 aa)) the chain is Cytoplasmic. The helical transmembrane segment at 391-409 (INPAPYTIITFPFLFAVMF) threads the bilayer. Over 410-411 (GD) the chain is Vacuolar. The helical transmembrane segment at 412 to 428 (CGHGMVMLMAALWMVLN) threads the bilayer. Residues 429-443 (ERHLLAQKSTNEMWN) lie on the Cytoplasmic side of the membrane. A helical membrane pass occupies residues 444–473 (IFFNGRYLILLMGIFSIYTGLIYNDCFSKS). Residues 474 to 538 (FNIFGSSWSV…ASNKLTFLNS (65 aa)) are Vacuolar-facing. Residues 539-558 (YKMKMSVILGIAHMIFGVIL) form a helical membrane-spanning segment. At 559-576 (SLFNHIYFRRTLNIILQF) the chain is on the cytoplasmic side. A helical membrane pass occupies residues 577 to 597 (IPEMIFMLSLFGYLVFMIIFK). Residues 598–642 (WCRYDAHTSRKAPSILIHFIGMFLFDYDDSSNAPLYGHQQEVQTF) are Vacuolar-facing. Residues 643–662 (FVIIALVSVPWMLLIKPFVL) traverse the membrane as a helical segment. Topologically, residues 663-720 (RAKHQKSQLQSFTIHEDAVEGDHSGHSSKKTAGAHGMKDGHEEEFNFGDIFVHQAIHT) are cytoplasmic. The tract at residues 681 to 700 (VEGDHSGHSSKKTAGAHGMK) is disordered. A helical transmembrane segment spans residues 721-745 (IEYCLGCISNTASYLRLWALSLAHA). At 746–766 (ELSEVLWTMVMSIGLRLQGWA) the chain is on the vacuolar side. Residues 767 to 805 (GLVGVFIIFAVFAVLTVAILLVMEGLSAFLHALRLHWVE) traverse the membrane as a helical segment. Residues 806 to 833 (FQNKFYEGAGSKFSPFSFKHVLEGTAEE) lie on the Cytoplasmic side of the membrane.

The protein belongs to the V-ATPase 116 kDa subunit family. V-ATPase is a heteromultimeric enzyme made up of two complexes: the ATP-hydrolytic V1 complex and the proton translocation V0 complex. The V1 complex consists of three catalytic AB heterodimers that form a heterohexamer, three peripheral stalks each consisting of EG heterodimers, one central rotor including subunits D and F, and the regulatory subunits C and H. The proton translocation complex V0 consists of the proton transport subunit a, a ring of proteolipid subunits c9c'', rotary subunit d, subunits e and f, and the accessory subunits ATP6AP1/Ac45 and ATP6AP2/PRR. Interacts with the V1 complex V-ATPase subunit A ATP6V1A. Interacts with the V0 complex V-ATPase subunit c ATP6V0C. As to expression, specifically expressed in kidney, but not in the heart, brain, spleen, lung, liver, muscle, or testis. Distribution within the kidney appears more widespread than that seen in man. High intensity staining at the surface of intercalated cells, with additional expression in the proximal tubule.

It localises to the apical cell membrane. Its subcellular location is the basolateral cell membrane. Subunit of the V0 complex of vacuolar(H+)-ATPase (V-ATPase), a multisubunit enzyme composed of a peripheral complex (V1) that hydrolyzes ATP and a membrane integral complex (V0) that translocates protons. V-ATPase is responsible for acidifying and maintaining the pH of intracellular compartments and in some cell types, is targeted to the plasma membrane, where it is responsible for acidifying the extracellular environment. Involved in normal vectorial acid transport into the urine by the kidney. The chain is V-type proton ATPase 116 kDa subunit a 4 (Atp6v0a4) from Mus musculus (Mouse).